The chain runs to 437 residues: Cytochrome b (437 aa).

Residues tryptophan 45–leucine 65 form a helical membrane-spanning segment. Residues histidine 97 and histidine 111 each contribute to the heme b site. The next 9 helical transmembrane spans lie at glycine 100–serine 120, tryptophan 129–leucine 149, phenylalanine 156–isoleucine 176, phenylalanine 194–tryptophan 214, phenylalanine 248–alanine 268, phenylalanine 298–valine 318, phenylalanine 330–aspartate 350, methionine 365–threonine 385, and tryptophan 391–leucine 411. Heme b is bound by residues histidine 198 and histidine 212.

This sequence belongs to the cytochrome b family. The main subunits of complex b-c1 are: cytochrome b, cytochrome c1 and the Rieske protein. It depends on heme b as a cofactor.

It localises to the cell membrane. Component of the ubiquinol-cytochrome c reductase complex (complex III or cytochrome b-c1 complex), which is a respiratory chain that generates an electrochemical potential coupled to ATP synthesis. The sequence is that of Cytochrome b (petB) from Rhodobacter capsulatus (strain ATCC BAA-309 / NBRC 16581 / SB1003).